A 242-amino-acid polypeptide reads, in one-letter code: Argininosuccinate synthase (242 aa).

It belongs to the argininosuccinate synthase family. Type 2 subfamily. In terms of assembly, homotetramer.

It localises to the cytoplasm. The catalysed reaction is L-citrulline + L-aspartate + ATP = 2-(N(omega)-L-arginino)succinate + AMP + diphosphate + H(+). Its pathway is amino-acid biosynthesis; L-arginine biosynthesis; L-arginine from L-ornithine and carbamoyl phosphate: step 2/3. This Dickeya chrysanthemi (Pectobacterium chrysanthemi) protein is Argininosuccinate synthase (argG).